Consider the following 152-residue polypeptide: Putative pre-16S rRNA nuclease (152 aa).

This sequence belongs to the YqgF nuclease family.

Its subcellular location is the cytoplasm. In terms of biological role, could be a nuclease involved in processing of the 5'-end of pre-16S rRNA. The chain is Putative pre-16S rRNA nuclease from Synechocystis sp. (strain ATCC 27184 / PCC 6803 / Kazusa).